Here is a 365-residue protein sequence, read N- to C-terminus: Eukaryotic translation initiation factor 3 subunit H (365 aa).

An MPN domain is found at V11–F160.

Belongs to the eIF-3 subunit H family. As to quaternary structure, component of the eukaryotic translation initiation factor 3 (eIF-3) complex.

It is found in the cytoplasm. Its function is as follows. Component of the eukaryotic translation initiation factor 3 (eIF-3) complex, which is involved in protein synthesis of a specialized repertoire of mRNAs and, together with other initiation factors, stimulates binding of mRNA and methionyl-tRNAi to the 40S ribosome. The eIF-3 complex specifically targets and initiates translation of a subset of mRNAs involved in cell proliferation. The polypeptide is Eukaryotic translation initiation factor 3 subunit H (Aspergillus clavatus (strain ATCC 1007 / CBS 513.65 / DSM 816 / NCTC 3887 / NRRL 1 / QM 1276 / 107)).